The primary structure comprises 324 residues: Beta-ketoacyl-[acyl-carrier-protein] synthase III (324 aa).

Residues C113 and H251 contribute to the active site. The segment at 252-256 is ACP-binding; sequence QANKR. The active site involves N281.

It belongs to the thiolase-like superfamily. FabH family. Homodimer.

Its subcellular location is the cytoplasm. The enzyme catalyses malonyl-[ACP] + acetyl-CoA + H(+) = 3-oxobutanoyl-[ACP] + CO2 + CoA. It participates in lipid metabolism; fatty acid biosynthesis. Functionally, catalyzes the condensation reaction of fatty acid synthesis by the addition to an acyl acceptor of two carbons from malonyl-ACP. Catalyzes the first condensation reaction which initiates fatty acid synthesis and may therefore play a role in governing the total rate of fatty acid production. Possesses both acetoacetyl-ACP synthase and acetyl transacylase activities. Its substrate specificity determines the biosynthesis of branched-chain and/or straight-chain of fatty acids. The polypeptide is Beta-ketoacyl-[acyl-carrier-protein] synthase III (Bartonella tribocorum (strain CIP 105476 / IBS 506)).